A 356-amino-acid polypeptide reads, in one-letter code: Magnesium-protoporphyrin IX monomethyl ester [oxidative] cyclase (356 aa).

Belongs to the AcsF family. Fe cation is required as a cofactor.

It catalyses the reaction Mg-protoporphyrin IX 13-monomethyl ester + 3 NADPH + 3 O2 + 2 H(+) = 3,8-divinyl protochlorophyllide a + 3 NADP(+) + 5 H2O. Its pathway is porphyrin-containing compound metabolism; chlorophyll biosynthesis (light-independent). Functionally, catalyzes the formation of the isocyclic ring in chlorophyll biosynthesis. Mediates the cyclase reaction, which results in the formation of divinylprotochlorophyllide (Pchlide) characteristic of all chlorophylls from magnesium-protoporphyrin IX 13-monomethyl ester (MgPMME). In Parasynechococcus marenigrum (strain WH8102), this protein is Magnesium-protoporphyrin IX monomethyl ester [oxidative] cyclase.